The following is a 106-amino-acid chain: Large ribosomal subunit protein uL23 (106 aa).

Belongs to the universal ribosomal protein uL23 family. As to quaternary structure, part of the 50S ribosomal subunit. Contacts protein L29, and trigger factor when it is bound to the ribosome.

In terms of biological role, one of the early assembly proteins it binds 23S rRNA. One of the proteins that surrounds the polypeptide exit tunnel on the outside of the ribosome. Forms the main docking site for trigger factor binding to the ribosome. In Neisseria meningitidis serogroup C / serotype 2a (strain ATCC 700532 / DSM 15464 / FAM18), this protein is Large ribosomal subunit protein uL23.